Consider the following 153-residue polypeptide: Arginine repressor (153 aa).

Belongs to the ArgR family.

It localises to the cytoplasm. It participates in amino-acid biosynthesis; L-arginine biosynthesis [regulation]. In terms of biological role, regulates arginine biosynthesis genes. In Clostridium tetani (strain Massachusetts / E88), this protein is Arginine repressor.